The primary structure comprises 519 residues: Threonine synthase, chloroplastic (519 aa).

The transit peptide at 1–40 directs the protein to the chloroplast; that stretch reads MAASCMLRSSFISPGLPQLHHQSTSKPNNGIHFFTPIKAT. Position 196 is an N6-(pyridoxal phosphate)lysine (Lys196). Pyridoxal 5'-phosphate contacts are provided by residues 328–332 and Thr465; that span reads GNLGN.

The protein belongs to the threonine synthase family. Homodimer. Pyridoxal 5'-phosphate serves as cofactor.

It is found in the plastid. The protein localises to the chloroplast. The enzyme catalyses O-phospho-L-homoserine + H2O = L-threonine + phosphate. It functions in the pathway amino-acid biosynthesis; L-threonine biosynthesis; L-threonine from L-aspartate: step 5/5. Its activity is regulated as follows. Allosterically activated by S-adenosyl-methionine (SAM). Functionally, catalyzes the gamma-elimination of phosphate from L-phosphohomoserine and the beta-addition of water to produce L-threonine. The polypeptide is Threonine synthase, chloroplastic (Solanum tuberosum (Potato)).